We begin with the raw amino-acid sequence, 331 residues long: ESX-3 secretion system protein EccE3 (331 aa).

The next 2 helical transmembrane spans lie at 11–31 (GRVT…PWQS) and 37–57 (LLGV…GLYF).

This sequence belongs to the EccE family. In terms of assembly, part of the ESX-3 / type VII secretion system (T7SS), which is composed of cytosolic and membrane components. The ESX-3 membrane complex is composed of EccB3, EccC3, EccD3 and EccE3.

It localises to the cell inner membrane. Functionally, part of the ESX-3 specialized secretion system, which is important for iron and zinc uptake or homeostasis. The chain is ESX-3 secretion system protein EccE3 from Mycobacterium tuberculosis (strain ATCC 25618 / H37Rv).